A 394-amino-acid chain; its full sequence is Phosphoglycerate kinase (394 aa).

Residues 21–23 (DFN), R36, 59–62 (HLGR), R118, and R151 each bind substrate. The residue at position 183 (S183) is a Phosphoserine. Positions 201 and 292 each coordinate ATP. Position 299 is a phosphothreonine (T299). ATP-binding positions include E323 and 350–353 (GGDS).

It belongs to the phosphoglycerate kinase family. Monomer.

Its subcellular location is the cytoplasm. The enzyme catalyses (2R)-3-phosphoglycerate + ATP = (2R)-3-phospho-glyceroyl phosphate + ADP. Its pathway is carbohydrate degradation; glycolysis; pyruvate from D-glyceraldehyde 3-phosphate: step 2/5. This Bacillus cereus (strain Q1) protein is Phosphoglycerate kinase.